We begin with the raw amino-acid sequence, 310 residues long: Olfactory receptor 5AR1 (310 aa).

The Extracellular portion of the chain corresponds to 1–28 (MDKENSSMVTEFIFMGITQDPQMEIIFF). N-linked (GlcNAc...) asparagine glycosylation occurs at N5. A helical membrane pass occupies residues 29–49 (VVFLIVYLVNVVGNIGMIILI). Over 50–58 (TTDTQLHTP) the chain is Cytoplasmic. A helical transmembrane segment spans residues 59–79 (MYFFLCNLSFVDLGYSSAIAP). Residues 80–100 (RMLADFLTNHKVISFSSCATQ) are Extracellular-facing. The cysteines at positions 97 and 189 are disulfide-linked. The helical transmembrane segment at 101–120 (FAFFVGFVDAECYVLAAMAY) threads the bilayer. The Cytoplasmic segment spans residues 121 to 139 (GRFVAICRPLHYSTFMSKQ). The helical transmembrane segment at 140–160 (VCLALMLGSYLAGLVSLVAHT) threads the bilayer. Residues 161–205 (TLTFSLSYCGSNIINHFFCEIPPLLALSCSDTYISEILLFSLCGF) lie on the Extracellular side of the membrane. The chain crosses the membrane as a helical span at residues 206–226 (IEFSTILIIFISYTFILVAII). At 227 to 239 (RMRSAEGRLKAFS) the chain is on the cytoplasmic side. A helical membrane pass occupies residues 240-260 (TCGSHLTGITLFYGTVMFMYL). Topologically, residues 261–271 (RPTSSYSLDQD) are extracellular. The chain crosses the membrane as a helical span at residues 272–292 (KWASVFYTVIIPMLNPLIYSL). At 293–310 (RNKDVKAAFKKLIGKKSQ) the chain is on the cytoplasmic side.

This sequence belongs to the G-protein coupled receptor 1 family.

It is found in the cell membrane. In terms of biological role, odorant receptor. This is Olfactory receptor 5AR1 from Homo sapiens (Human).